Reading from the N-terminus, the 949-residue chain is uncharacterized protein (949 aa).

In terms of domain architecture, Calponin-homology (CH) spans 64–170 (LCSVHEAKKW…YCLHALSYLL (107 aa)).

It localises to the nucleus. This is an uncharacterized protein from Schizosaccharomyces pombe (strain 972 / ATCC 24843) (Fission yeast).